The following is a 458-amino-acid chain: UDP-N-acetylmuramoylalanine--D-glutamate ligase (458 aa).

Residue 124–130 coordinates ATP; it reads GSDGKTT.

The protein belongs to the MurCDEF family.

The protein resides in the cytoplasm. The catalysed reaction is UDP-N-acetyl-alpha-D-muramoyl-L-alanine + D-glutamate + ATP = UDP-N-acetyl-alpha-D-muramoyl-L-alanyl-D-glutamate + ADP + phosphate + H(+). The protein operates within cell wall biogenesis; peptidoglycan biosynthesis. In terms of biological role, cell wall formation. Catalyzes the addition of glutamate to the nucleotide precursor UDP-N-acetylmuramoyl-L-alanine (UMA). The protein is UDP-N-acetylmuramoylalanine--D-glutamate ligase of Clostridium botulinum (strain Loch Maree / Type A3).